The sequence spans 319 residues: Pectinesterase (319 aa).

Glutamine 1 carries the pyrrolidone carboxylic acid modification. Substrate contacts are provided by threonine 83 and glutamine 113. Aspartate 136 serves as the catalytic Proton donor. A disulfide bond links cysteine 150 and cysteine 170. Aspartate 157 functions as the Nucleophile in the catalytic mechanism. 2 residues coordinate substrate: arginine 225 and tryptophan 227.

Belongs to the pectinesterase family.

Its subcellular location is the secreted. The protein localises to the cell wall. The catalysed reaction is [(1-&gt;4)-alpha-D-galacturonosyl methyl ester](n) + n H2O = [(1-&gt;4)-alpha-D-galacturonosyl](n) + n methanol + n H(+). Its pathway is glycan metabolism; pectin degradation; 2-dehydro-3-deoxy-D-gluconate from pectin: step 1/5. In terms of biological role, catalyzes the deesterification of methyl-esterified D-galactosiduronic acid units in pectic compounds. It participates in modulating cell wall during fruit ripening, cell wall extension during pollen germination, and in defense mechanisms against pathogens. This Daucus carota (Wild carrot) protein is Pectinesterase.